The following is a 1266-amino-acid chain: MPSDCGDDDHGGGSAPAGFELQEDPSFWKDNNVQVVIRVRPLSSGEISVQGQKRCVRQDSCQSITWTGHPESRFKFDLVADEYVTQENLFKVAGVPMVDNCMAGYNSCMFAYGQTGSGKTHTMLGDIENGTRRNNVNCGMTPRVFEHLFLRIQKEKEIRKEEKLRFTCKCSFLEIYNEQILDLLNPNSVNLQIREDAKKGVHVENLTEHEVSNAREAMQQLVEGAANRKVAATNMNRASSRSHSVFTCLIESKWESQGINHHRFSRLNLVDLAGSERQKSSGAEGERLKEATNINKSLSTLGLVITNLIAVSNKKSHHVPYRDSKLTFLLQDSLGGNSKTTIIANISPSSCCAAETLSTLKFAQRAKYIRNNAIINEDASGDVLSMRLQIQHLKKEVSRLQGLVNSDKAECTSSSGFICESPSTLKWNQGQGSFSPLMFDKRAMQRKDYDAALVAAFRREQETEAKLKAMIAAKLVAEQLATQRAEEVRSFKMRLRFREDRIKRLEQVTSGKLSAESHLLQENEDLVKEVDALRGLLDRNPEVTRFAMENLQLKEDIRRLQTFVDEGEREMMHEQIIVLQDKLLEALDWKLMHEKDPINKDLSFLGESADEEMEFIRLQAIQNEREIESLRKNLSFCLESKEKLERRVDELTLELEAAKKYHEESEAVELQVQTEVDLHDLPDAQTELKTLVDAIATASQREAEAHETAIGLAKANEELRTRLTVLIEDNKRLVELYEHAIANGEVNQDGGHPAIPQIEGVNEQQSSHSYGGAAANGVLPDDKPESATILPADNSSSEVSDSKIMDGQCNHKDNFSRSELTDLQLQLDEMHEENDKLMGLYEKAMQERDEFKRKFFEGSNSLTTVDTQYEDVEMRDATDDEDLEVKHVHDSAISTFKEILRLVRVKLKNVHDKLVTTQDAVEYFKLLEMASTKAEELSASIQHHCLELKHDQEDMNALKAELSQSQESKEALESKYFSPVASCWNLDLKTKALVGSKFDVSLELLNQKKEQLSHLQTLKKEFSVASTKARESETALRSKIDGLKVKLRSFEAQRKEAERVLFAIDNIDTSTPTLSKPVNFGKASELLRSEEERTKLLSELKKSREQLIMVQKEIKSMNRHDDIDCKIASLESEVENCCLTLLEADVEKFVRDNTLTEIWKEEQKDMDCLLVDYQECVFKVNLKEEKIRACEESLQHQTRSLDDMNSKLNQAMRDLGEHLRDRTPCDLDASMLHVSDKVKGDLDAMALHVAEAVQLLLVQGENQTNP.

Residues 1–22 (MPSDCGDDDHGGGSAPAGFELQ) are disordered. Residues 32–369 (NVQVVIRVRP…LKFAQRAKYI (338 aa)) enclose the Kinesin motor domain. Residue 113–120 (GQTGSGKT) participates in ATP binding. Coiled coils occupy residues 613–668 (MEFI…SEAV), 817–854 (RSEL…FKRK), 1029–1060 (ARES…AERV), and 1084–1120 (SELL…MNRH).

It belongs to the TRAFAC class myosin-kinesin ATPase superfamily. Kinesin family. KIN-12 subfamily.

The sequence is that of Kinesin-like protein KIN-12G from Oryza sativa subsp. japonica (Rice).